The chain runs to 369 residues: Delta(6)-protoilludene synthase STEHIDRAFT_73029 (369 aa).

Positions 107, 243, 247, and 251 each coordinate Mg(2+). The D(D/E)XX(D/E) motif signature appears at 107-111 (DEYSD). The short motif at 243-251 (NDIVSYNLE) is the NSE motif element. (2E,6E)-farnesyl diphosphate contacts are provided by Arg333 and Tyr334.

Belongs to the terpene synthase family. It depends on Mg(2+) as a cofactor. Mn(2+) is required as a cofactor. Requires Ca(2+) as cofactor. Ni(2+) serves as cofactor. The cofactor is Co(2+).

The enzyme catalyses (2E,6E)-farnesyl diphosphate = Delta(6)-protoilludene + diphosphate. The catalysed reaction is (2E,6E)-farnesyl diphosphate = alpha-selinene + diphosphate. Its activity is regulated as follows. Ca(2+) switches the cyclization mechanism of delta(6)-protoilludene synthase from 1,11 to 1,10 cyclization which leads to the production of beta-elemene. In terms of biological role, terpene cyclase that catalyzes the cyclization of farnesyl diphosphate (FPP) to delta(6)-protoilludene. In presence of Ca(2+), a significant switch from 1,11 to a dual 1,11/1,10 cyclization occurs, producing beta-elemene as the major product, with lower levels of delta(6)-protoilludene and (E)-beta-caryophyllene, and traces of beta-selinene and alpha-selinene. The protein is Delta(6)-protoilludene synthase STEHIDRAFT_73029 of Stereum hirsutum (strain FP-91666) (White-rot fungus).